A 591-amino-acid chain; its full sequence is Zinc finger protein 48 (591 aa).

Met1 is subject to N-acetylmethionine. Disordered stretches follow at residues 1–24 (MEAS…IKEE) and 55–80 (GLGK…GSND). Basic and acidic residues-rich tracts occupy residues 8 to 24 (EFEH…IKEE) and 55 to 65 (GLGKRQPRDPV). Ser12 carries the post-translational modification Phosphoserine. Residue Lys58 forms a Glycyl lysine isopeptide (Lys-Gly) (interchain with G-Cter in SUMO2) linkage. C2H2-type zinc fingers lie at residues 83-105 (AVCG…QRTH) and 111-133 (YKCG…QRTH). The disordered stretch occupies residues 131-160 (RTHTGEKAYRVRPPAPGPPKMPRSRIPAGE). A Glycyl lysine isopeptide (Lys-Gly) (interchain with G-Cter in SUMO2) cross-link involves residue Lys150. 2 consecutive C2H2-type zinc fingers follow at residues 163-185 (TICG…QRTH) and 191-213 (YKCG…QRTH). The segment at 206–241 (RIKHQRTHRGDQLPRPVVPRRQPSPAAPAAPHRPKA) is disordered. Low complexity predominate over residues 224-235 (PRRQPSPAAPAA). Lys240 is covalently cross-linked (Glycyl lysine isopeptide (Lys-Gly) (interchain with G-Cter in SUMO2)). C2H2-type zinc fingers lie at residues 246 to 268 (YICT…QRSH) and 274 to 296 (FGCD…LRVH). Residue Lys300 forms a Glycyl lysine isopeptide (Lys-Gly) (interchain with G-Cter in SUMO2) linkage. 2 consecutive C2H2-type zinc fingers follow at residues 302-324 (YLCP…LRTH) and 330-352 (HACP…RLTH). Positions 372-429 (PPPPPLGTSPSLTPRSPSHSSDGPFGLPGLEPEPGGPQAGEPPPPLAGDKPHKCPECG) are disordered. The span at 379 to 404 (TSPSLTPRSPSHSSDGPFGLPGLEPE) shows a compositional bias: low complexity. The C2H2-type 9 zinc finger occupies 423–445 (HKCPECGKGFRRSSDLVKHHRVH). A Glycyl lysine isopeptide (Lys-Gly) (interchain with G-Cter in SUMO2) cross-link involves residue Lys449. Residues 451-473 (YLCPECGKGFADSSARVKHLRTH) form a C2H2-type 10 zinc finger. The tract at residues 464-512 (SARVKHLRTHQGERTRPPPPPSTLLRPHNPPGSVPIVPQSRVQGRPSGP) is disordered. Over residues 480-496 (PPPPPSTLLRPHNPPGS) the composition is skewed to pro residues. 2 consecutive C2H2-type zinc fingers follow at residues 516–538 (HVCG…RRTH) and 544–566 (YKCA…QRGH). The disordered stretch occupies residues 564 to 591 (RGHLALKPFGVGDGPPRPLKEESPAGLE). A compositionally biased stretch (basic and acidic residues) spans 581-591 (PLKEESPAGLE). Residue Lys583 forms a Glycyl lysine isopeptide (Lys-Gly) (interchain with G-Cter in SUMO2) linkage.

The protein belongs to the krueppel C2H2-type zinc-finger protein family.

It is found in the nucleus. May be involved in transcriptional regulation. In Mus musculus (Mouse), this protein is Zinc finger protein 48 (Znf48).